The following is a 70-amino-acid chain: Conotoxin ba3a (70 aa).

Positions 1-20 are cleaved as a signal peptide; the sequence is MLKIGVMLSIILVLFPLATL. A propeptide spanning residues 21–55 is cleaved from the precursor; it reads QLVAERPAAERYAENKQDLNPDERRNYLVDLGVER.

Expressed by the venom duct.

It localises to the secreted. In Conus bayani (Bayan's cone), this protein is Conotoxin ba3a.